We begin with the raw amino-acid sequence, 550 residues long: Zinc finger protein squeeze (550 aa).

The segment covering 73–105 has biased composition (low complexity); that stretch reads QQQQQQQQQEMLQQQQQHQAHQEQQQQQQQQQQ. A disordered region spans residues 73 to 179; it reads QQQQQQQQQE…GGGGGDGDQS (107 aa). A compositionally biased stretch (basic residues) spans 106–117; it reads QHHHQQQQHHLK. Residues 141–156 are compositionally biased toward polar residues; that stretch reads RSPQRPLMSSGSNASS. Residues 164 to 176 show a composition bias toward gly residues; it reads SGGGPGGGGGGDG. C2H2-type zinc fingers lie at residues 182–204, 210–232, 238–262, 268–290, and 299–321; these read YKCA…TRIH, YRCE…IRTH, YKCR…SRCH, FKCN…IPKH, and HICN…LQKH. A disordered region spans residues 399–485; that stretch reads LQQHQQQQQQ…VPPSHLQQHR (87 aa). Positions 400–416 are enriched in low complexity; it reads QQHQQQQQQQQQDMLQQ. Threonine 424 is subject to Phosphothreonine. 2 positions are modified to phosphoserine: serine 428 and serine 430. Over residues 444–460 the composition is skewed to low complexity; that stretch reads QTTPQHHLQQQQQQQQP. Phosphotyrosine occurs at positions 494 and 496.

This sequence belongs to the krueppel C2H2-type zinc-finger protein family. Interacts with nab; which acts as a coactivator. Interacts with ap.

Its subcellular location is the nucleus. Transcription factor involved in neuronal fate specification. First required in embryonic CNS development to define the number of cells that express apterous (ap) in the ap thoracic cluster of interneurons. Later on, it plays a central role in the combinatorial code of transcription factors that specifies the fate of the Tv neuron in the ap cluster by participating in the transcription regulation of FMRFa in Tv cells. Also required for projection neuron dendritic targeting. The polypeptide is Zinc finger protein squeeze (sqz) (Drosophila pseudoobscura pseudoobscura (Fruit fly)).